The primary structure comprises 909 residues: UPF0182 protein Moth_1139 (909 aa).

The next 7 helical transmembrane spans lie at 8-28 (FCLLIIIPGFLVAAYLGSHFL), 51-71 (VGIRLGTIAFFFLFFYLNLLF), 103-123 (LGILYLLLSLAGALIFSPLAA), 165-185 (LLITAVVGAVLVTGFFYFIFN), 201-221 (LVHFSTLVALLFLIQAWGFRL), 245-265 (LLPGYNILGWVAVACGLIIVL), and 277-297 (AGILSFMAAYFLLVIAVPLAV). Residues 843 to 862 (PAPAASPQPPSQAATGSPGN) are disordered.

It belongs to the UPF0182 family.

Its subcellular location is the cell membrane. This Moorella thermoacetica (strain ATCC 39073 / JCM 9320) protein is UPF0182 protein Moth_1139.